The primary structure comprises 890 residues: MIKNRFILILVIVALTVSLLSFLLAFCTDWLFFVETGFTSVFTTKLYAQAGSGLLFAGVLFAGTLLNLLLAGKAVFPTYATPREAGDFRPRLDEARRLVKPLGIPACAILALLVGQWGAMQWEKLLFFVNRVSVGTTDPVMGRDIGFYLFTLPLMETITAFAGFTLLTSLFLTVLVYTVRGGICLSERGVAIDGTVRRHLAILLLLLSCVIAAGFHLDCFRLLFSSNGIFHGAGYTDVHSRLPTYRILTILAPLAGTALAIGLWKGAWRMALLAPLAVIVLHVIGIRVYPGLLQKFKVAPNELALEAPYIRNNIALTRLGFDLDKIETIPFDVDTQLSSADIARNDATIKNIRLWDHAPLLKTYSQLQQIRTYYRFFDVDNDRYLVNGRYSQVMLSPRELSYADLPSRNWINERLIFTHGNGITFGPVSRISKEGLPEFFVKDIPAVSLADIRVTRPEIYFGELSNEYVIVRTRVPEFSYPTSSGNINTTYAGTGGVPMDSLAKRMLFAARFRTEKILLSSDITSQSSIIFNRNINERVRAVAPFLHFDDDPYMVVDDRGRLKWIIDAYTFSDRLPCSKPIKGGVNYMRNSVKAVVDAYDGTLAFYISDPHDVLIRVYDRMFPGLFRPISAMPDDLRRHVRYPHHFLQLQAAMYTAYHMTDPKVFYNKENLWQVPALGEKPMEPYYTIMKLPGETAEEYILLLPFTPSKRDNLAAWLTARSDGANYGKIRAYTFPRDRLIYGPKQIDARINQDSFISQQLTLWNQRGSEVIRGSLLVIPIEKSLLYVQPLFLAADKAGLPELKRVIVAFGDQVVMEENLEQALQRLFGGKRAPEPASSATAKDSTTSPALLAKEAMAAYEKAISQQRQGNWSGYGEELRRLEQILRRMAQ.

A run of 7 helical transmembrane segments spans residues Phe6–Phe26, Ala50–Leu70, Leu102–Trp122, Thr157–Tyr177, Leu200–Phe220, Thr244–Trp264, and Gly266–Ile286.

It belongs to the UPF0182 family.

It is found in the cell membrane. This is UPF0182 protein Ppro_2689 from Pelobacter propionicus (strain DSM 2379 / NBRC 103807 / OttBd1).